Here is a 171-residue protein sequence, read N- to C-terminus: Crossover junction endodeoxyribonuclease RuvC (171 aa).

Catalysis depends on residues aspartate 11, glutamate 71, and aspartate 143. Residues aspartate 11, glutamate 71, and aspartate 143 each coordinate Mg(2+).

It belongs to the RuvC family. As to quaternary structure, homodimer which binds Holliday junction (HJ) DNA. The HJ becomes 2-fold symmetrical on binding to RuvC with unstacked arms; it has a different conformation from HJ DNA in complex with RuvA. In the full resolvosome a probable DNA-RuvA(4)-RuvB(12)-RuvC(2) complex forms which resolves the HJ. Mg(2+) is required as a cofactor.

The protein localises to the cytoplasm. The catalysed reaction is Endonucleolytic cleavage at a junction such as a reciprocal single-stranded crossover between two homologous DNA duplexes (Holliday junction).. The RuvA-RuvB-RuvC complex processes Holliday junction (HJ) DNA during genetic recombination and DNA repair. Endonuclease that resolves HJ intermediates. Cleaves cruciform DNA by making single-stranded nicks across the HJ at symmetrical positions within the homologous arms, yielding a 5'-phosphate and a 3'-hydroxyl group; requires a central core of homology in the junction. The consensus cleavage sequence is 5'-(A/T)TT(C/G)-3'. Cleavage occurs on the 3'-side of the TT dinucleotide at the point of strand exchange. HJ branch migration catalyzed by RuvA-RuvB allows RuvC to scan DNA until it finds its consensus sequence, where it cleaves and resolves the cruciform DNA. This is Crossover junction endodeoxyribonuclease RuvC from Chelativorans sp. (strain BNC1).